Here is a 213-residue protein sequence, read N- to C-terminus: Uridine kinase (213 aa).

15–22 (GASASGKS) contributes to the ATP binding site.

The protein belongs to the uridine kinase family.

It is found in the cytoplasm. The catalysed reaction is uridine + ATP = UMP + ADP + H(+). It catalyses the reaction cytidine + ATP = CMP + ADP + H(+). It functions in the pathway pyrimidine metabolism; CTP biosynthesis via salvage pathway; CTP from cytidine: step 1/3. Its pathway is pyrimidine metabolism; UMP biosynthesis via salvage pathway; UMP from uridine: step 1/1. The protein is Uridine kinase of Erwinia tasmaniensis (strain DSM 17950 / CFBP 7177 / CIP 109463 / NCPPB 4357 / Et1/99).